The sequence spans 316 residues: Ubiquinol oxidase, mitochondrial (316 aa).

A mitochondrion-targeting transit peptide spans 1 to 26; sequence MGVRAQPLLARSLITTTQPWILSARS. A helical membrane pass occupies residues 124–144; sequence VHRAVVLETVAAVPGMVAGML. The Fe cation site is built by E131, E170, and H173. A helical transmembrane segment spans residues 189-209; the sequence is MLVALVQTLFFNVYFLAYMLF. Fe cation-binding residues include E221, E272, and H275.

Belongs to the alternative oxidase family. Requires Fe cation as cofactor.

The protein localises to the mitochondrion inner membrane. The catalysed reaction is 2 a ubiquinol + O2 = 2 a ubiquinone + 2 H2O. Functionally, alternative oxidase which function may be to reoxidize reducing equivalents produced by glycolysis such as ubiquinol. This Batrachochytrium dendrobatidis (strain JAM81 / FGSC 10211) (Frog chytrid fungus) protein is Ubiquinol oxidase, mitochondrial (AOX).